Here is a 274-residue protein sequence, read N- to C-terminus: Diaminopimelate epimerase (274 aa).

Residues Asn-11, Gln-44, and Asn-64 each coordinate substrate. Catalysis depends on Cys-73, which acts as the Proton donor. Residues 74-75 (GN), Asn-157, Asn-190, and 208-209 (ER) each bind substrate. Cys-217 serves as the catalytic Proton acceptor. Substrate is bound at residue 218–219 (GS).

Belongs to the diaminopimelate epimerase family. In terms of assembly, homodimer (Potential). Previously DapF has been proposed to be a monomer, however it seems that it adopts a dimeric structure.

Its subcellular location is the cytoplasm. It carries out the reaction (2S,6S)-2,6-diaminopimelate = meso-2,6-diaminopimelate. Its pathway is amino-acid biosynthesis; L-lysine biosynthesis via DAP pathway; DL-2,6-diaminopimelate from LL-2,6-diaminopimelate: step 1/1. Its activity is regulated as follows. Inhibited by LL-aziridino (LL-AziDAP), DL-aziridino (DL-AziDAP). Also inhibited by (2S,3R,6S)-2,6-diamino-3-fluoropimelate (L,L-3-fluoro-DAP) and (2R,3S,6S)-2,6-diamino-3-fluoropimelate (D,L-3-fluoro-DAP). In terms of biological role, catalyzes the stereoinversion of LL-2,6-diaminopimelate (L,L-DAP) to meso-diaminopimelate (meso-DAP), a precursor of L-lysine and an essential component of the bacterial peptidoglycan. Only accepts DAP isomers with the L configuration. The chain is Diaminopimelate epimerase from Haemophilus influenzae (strain ATCC 51907 / DSM 11121 / KW20 / Rd).